The following is a 921-amino-acid chain: Protein translocase subunit SecA (921 aa).

ATP is bound by residues glutamine 87, 105–109, and aspartate 515; that span reads GEGKT. A disordered region spans residues 872–901; it reads DMEVAGSTGDRGAALDIQPAPVRSGPKIGR. 4 residues coordinate Zn(2+): cysteine 905, cysteine 907, cysteine 916, and cysteine 917.

Belongs to the SecA family. In terms of assembly, monomer and homodimer. Part of the essential Sec protein translocation apparatus which comprises SecA, SecYEG and auxiliary proteins SecDF-YajC and YidC. It depends on Zn(2+) as a cofactor.

The protein localises to the cell inner membrane. It is found in the cytoplasm. It carries out the reaction ATP + H2O + cellular proteinSide 1 = ADP + phosphate + cellular proteinSide 2.. Functionally, part of the Sec protein translocase complex. Interacts with the SecYEG preprotein conducting channel. Has a central role in coupling the hydrolysis of ATP to the transfer of proteins into and across the cell membrane, serving both as a receptor for the preprotein-SecB complex and as an ATP-driven molecular motor driving the stepwise translocation of polypeptide chains across the membrane. This Polynucleobacter asymbioticus (strain DSM 18221 / CIP 109841 / QLW-P1DMWA-1) (Polynucleobacter necessarius subsp. asymbioticus) protein is Protein translocase subunit SecA.